The chain runs to 195 residues: Small ribosomal subunit protein uS4 (195 aa).

The S4 RNA-binding domain maps to 109 to 183; sequence RRLQTQVFKL…VKRKNLKKNQ (75 aa). Residues 165–195 form a disordered region; that stretch reads PFGGGRPGRVKRKNLKKNQGGGGGAAEEEED.

It belongs to the universal ribosomal protein uS4 family. Component of the small ribosomal subunit. Identified in a IGF2BP1-dependent mRNP granule complex containing untranslated mRNAs. Part of the small subunit (SSU) processome, composed of more than 70 proteins and the RNA chaperone small nucleolar RNA (snoRNA) U3.

It is found in the cytoplasm. The protein localises to the nucleus. It localises to the nucleolus. Functionally, component of the small ribosomal subunit. The ribosome is a large ribonucleoprotein complex responsible for the synthesis of proteins in the cell. Part of the small subunit (SSU) processome, first precursor of the small eukaryotic ribosomal subunit. During the assembly of the SSU processome in the nucleolus, many ribosome biogenesis factors, an RNA chaperone and ribosomal proteins associate with the nascent pre-rRNA and work in concert to generate RNA folding, modifications, rearrangements and cleavage as well as targeted degradation of pre-ribosomal RNA by the RNA exosome. This chain is Small ribosomal subunit protein uS4, found in Drosophila melanogaster (Fruit fly).